A 147-amino-acid chain; its full sequence is Phospholipase A2 inhibitor subunit A (147 aa).

A C-type lectin domain is found at Glu-62–Phe-143. Cystine bridges form between Cys-64-Cys-141 and Cys-119-Cys-133. The N-linked (GlcNAc...) asparagine glycan is linked to Asn-103.

It belongs to the alpha-type phospholipase A2 inhibitor family. As to quaternary structure, homo- or heterotrimer; homotrimer of PLI-A chains, two PLI-A and one PLI-B chains, one PLI-A and two PLI-B chains, and homotrimer of PLI-B chains (with a ratio of 1:3:3:1). In terms of tissue distribution, expressed by the liver.

It localises to the secreted. In terms of biological role, PLI binds directly phospholipase A2 in the presence or absence of calcium. Inhibitory activity of the PLI-A homotrimer is more specific than that of the PLI-B homotrimer. This Protobothrops flavoviridis (Habu) protein is Phospholipase A2 inhibitor subunit A.